Consider the following 497-residue polypeptide: Serine/threonine-protein phosphatase 2A 56 kDa regulatory subunit beta isoform (497 aa).

The segment covering 1–19 (METKLPPASTPTSPSSPGL) has biased composition (low complexity). Disordered regions lie at residues 1–55 (METK…YQSN) and 473–497 (QGTQ…GGQS). 6 positions are modified to phosphoserine: Ser32, Ser35, Ser44, Ser46, Ser47, and Ser48. The segment covering 34 to 45 (RSLRRARPRRSH) has biased composition (basic residues).

The protein belongs to the phosphatase 2A regulatory subunit B56 family. As to quaternary structure, component of the serine/threonine-protein phosphatase 2A complex (PP2A). This complex consists of a common heterodimeric core enzyme, composed of a 36 kDa catalytic subunit (subunit C) and a 65 kDa constant scaffold subunit (PR65 or subunit A), that associates with a variety of regulatory subunits. Proteins that associate with the core dimer include three families of regulatory subunits B (the R2/B/PR55/B55, R3/B''/PR72/PR130/PR59 and R5/B'/B56 families), the 48 kDa variable regulatory subunit, viral proteins, and cell signaling molecules. Interacts with SGO1. Interacts with AKT1. In terms of processing, ubiquitinated by CUL3-KLHL15 complex; this modification leads to proteasomal degradation. Widely expressed at the mRNA level, with highest levels in cerebellum and lung.

It localises to the cytoplasm. Its function is as follows. As the regulatory component of the serine/threonine-protein phosphatase 2A (PP2A) holoenzyme, modulates substrate specificity, subcellular localization, and responsiveness to phosphorylation. The phosphorylated form mediates the interaction between PP2A and AKT1, leading to AKT1 dephosphorylation. This Rattus norvegicus (Rat) protein is Serine/threonine-protein phosphatase 2A 56 kDa regulatory subunit beta isoform (Ppp2r5b).